Consider the following 406-residue polypeptide: COP9 signalosome complex subunit 4 (406 aa).

An N-acetylalanine modification is found at alanine 2. Position 25 is an N6-acetyllysine (lysine 25). In terms of domain architecture, PCI spans 197–366; the sequence is YRRKFIEAAQ…GIVHFETREA (170 aa).

Belongs to the CSN4 family. Component of the CSN complex, composed of COPS1/GPS1, COPS2, COPS3, COPS4, COPS5, COPS6, COPS7 (COPS7A or COPS7B), COPS8 and COPS9. In the complex, it probably interacts directly with COPS1, COPS2, COPS3, COPS5, COPS6, COPS7 (COPS7A or COPS7B) and COPS8. Interacts with TOR1A; the interaction is direct and associates TOR1A and SNAPIN with the CSN complex. Interacts with STON2; controls STON2 neddylation levels. Interacts with ERCC6.

Its subcellular location is the cytoplasm. The protein localises to the nucleus. It is found in the cytoplasmic vesicle. It localises to the secretory vesicle. The protein resides in the synaptic vesicle. Component of the COP9 signalosome complex (CSN), a complex involved in various cellular and developmental processes. The CSN complex is an essential regulator of the ubiquitin (Ubl) conjugation pathway by mediating the deneddylation of the cullin subunits of SCF-type E3 ligase complexes, leading to decrease the Ubl ligase activity of SCF-type complexes such as SCF, CSA or DDB2. Also involved in the deneddylation of non-cullin subunits such as STON2. The complex is also involved in phosphorylation of p53/TP53, c-jun/JUN, IkappaBalpha/NFKBIA, ITPK1, IRF8/ICSBP and SNAPIN, possibly via its association with CK2 and PKD kinases. CSN-dependent phosphorylation of TP53 and JUN promotes and protects degradation by the Ubl system, respectively. The polypeptide is COP9 signalosome complex subunit 4 (Cops4) (Rattus norvegicus (Rat)).